Here is a 176-residue protein sequence, read N- to C-terminus: Mitochondrial inner membrane protein Mpv17 (176 aa).

4 consecutive transmembrane segments (helical) span residues 18–38, 53–73, 94–114, and 131–151; these read VQVL…QQLV, TMVS…YKVL, GGFA…LNGM, and LITN…LVPL.

This sequence belongs to the peroxisomal membrane protein PXMP2/4 family. As to expression, high levels in heart, kidney, and brain, intermediate levels in testis, and low levels in liver and spleen.

Its subcellular location is the mitochondrion inner membrane. Non-selective channel that modulates the membrane potential under normal conditions and oxidative stress, and is involved in mitochondrial homeostasis. Involved in mitochondrial deoxynucleoside triphosphates (dNTP) pool homeostasis and mitochondrial DNA (mtDNA) maintenance. May be involved in the regulation of reactive oxygen species metabolism and the control of oxidative phosphorylation. The protein is Mitochondrial inner membrane protein Mpv17 of Mus musculus (Mouse).